The sequence spans 75 residues: Exodeoxyribonuclease 7 small subunit (75 aa).

The protein belongs to the XseB family. As to quaternary structure, heterooligomer composed of large and small subunits.

The protein localises to the cytoplasm. The catalysed reaction is Exonucleolytic cleavage in either 5'- to 3'- or 3'- to 5'-direction to yield nucleoside 5'-phosphates.. Bidirectionally degrades single-stranded DNA into large acid-insoluble oligonucleotides, which are then degraded further into small acid-soluble oligonucleotides. The chain is Exodeoxyribonuclease 7 small subunit from Nostoc punctiforme (strain ATCC 29133 / PCC 73102).